The following is a 291-amino-acid chain: Sulfate transport system permease protein CysW (291 aa).

Residues 1–22 (MAEVTQLKRYDARPINWGKWFL) lie on the Cytoplasmic side of the membrane. A helical transmembrane segment spans residues 23–43 (IGIGMLVSAFILLVPMIYIFV). Topologically, residues 44 to 69 (QAFSKGLMPVLQNLADPDMLHAIWLT) are periplasmic. The ABC transmembrane type-1 domain occupies 66–270 (IWLTVMIALI…MAIITLFLKS (205 aa)). A helical transmembrane segment spans residues 70 to 90 (VMIALIAVPVNLVFGILLAWL). Residues 91–104 (VTRFNFPGRQLLLT) lie on the Cytoplasmic side of the membrane. Residues 105–125 (LLDIPFAVSPVVAGLVYLLFY) traverse the membrane as a helical segment. Topologically, residues 126–141 (GSNGPLGGWLDEHNLQ) are periplasmic. The helical transmembrane segment at 142-162 (IMFSWPGMVLVTIFVTCPFVV) threads the bilayer. The Cytoplasmic segment spans residues 163–200 (RELVPVMLSQGSQEDEAAILLGASGWQMFRRVTLPNIR). The helical transmembrane segment at 201-221 (WALLYGVVLTNARAIGEFGAV) threads the bilayer. Topologically, residues 222-247 (SVVSGSIRGETLSLPLQIELLEQDYN) are periplasmic. The chain crosses the membrane as a helical span at residues 248-268 (TVGSFTAAALLTLMAIITLFL). At 269–291 (KSMLQWRLENQEKRAQQEEHHEH) the chain is on the cytoplasmic side.

This sequence belongs to the binding-protein-dependent transport system permease family. CysTW subfamily. In terms of assembly, the complex is composed of two ATP-binding proteins (CysA), two transmembrane proteins (CysT and CysW) and a solute-binding protein (CysP).

It is found in the cell inner membrane. In terms of biological role, part of the ABC transporter complex CysAWTP (TC 3.A.1.6.1) involved in sulfate/thiosulfate import. Probably responsible for the translocation of the substrate across the membrane. The sequence is that of Sulfate transport system permease protein CysW (cysW) from Escherichia coli O6:H1 (strain CFT073 / ATCC 700928 / UPEC).